The chain runs to 466 residues: Cysteine--tRNA ligase 1 (466 aa).

A Zn(2+)-binding site is contributed by Cys27. A 'HIGH' region motif is present at residues 29 to 39; that stretch reads PTVQSPPHIGH. The Zn(2+) site is built by Cys211, His236, and Glu240. The 'KMSKS' region motif lies at 267–271; it reads KMSKS. Lys270 is an ATP binding site.

The protein belongs to the class-I aminoacyl-tRNA synthetase family. As to quaternary structure, monomer. The cofactor is Zn(2+).

The protein resides in the cytoplasm. The enzyme catalyses tRNA(Cys) + L-cysteine + ATP = L-cysteinyl-tRNA(Cys) + AMP + diphosphate. The sequence is that of Cysteine--tRNA ligase 1 from Tropheryma whipplei (strain TW08/27) (Whipple's bacillus).